Consider the following 415-residue polypeptide: Squalene synthase 11 (415 aa).

2 helical membrane passes run 281 to 301 and 392 to 412; these read AIFRFCAIPQIMAIGTLALCF and LIIILFIILAILYAYLSSNLP.

This sequence belongs to the phytoene/squalene synthase family. The cofactor is Mg(2+). Requires Mn(2+) as cofactor.

It is found in the endoplasmic reticulum membrane. It carries out the reaction 2 (2E,6E)-farnesyl diphosphate + NADH + H(+) = squalene + 2 diphosphate + NAD(+). The enzyme catalyses 2 (2E,6E)-farnesyl diphosphate + NADPH + H(+) = squalene + 2 diphosphate + NADP(+). The protein operates within terpene metabolism; lanosterol biosynthesis; lanosterol from farnesyl diphosphate: step 1/3. Component of the triterpene saponins (e.g. ginsenosides or panaxosides) and phytosterols biosynthetic pathways. Catalyzes the biosynthesis of squalene. This is Squalene synthase 11 from Panax ginseng (Korean ginseng).